A 639-amino-acid chain; its full sequence is Collagen alpha-1(XII) chain (639 aa).

One can recognise a VWFA domain in the interval 1–114; the sequence is CRKSLLQAVA…DSLSKIVDDL (114 aa). Fibronectin type-III domains follow at residues 130 to 219, 220 to 310, 311 to 401, 402 to 490, 491 to 585, and 586 to 639; these read APSN…LPVP, IVSL…LPLP, RPQD…VPAP, TNLR…SPKS, GPRN…TVRN, and LRVY…LRNL. The interval 473-496 is disordered; the sequence is DESESDDLTGSERTSPKSGPRNLQ.

Belongs to the fibril-associated collagens with interrupted helices (FACIT) family. In terms of assembly, trimer of identical chains each containing 190 kDa of non-triple-helical sequences. In terms of processing, the triple-helical tail is stabilized by disulfide bonds at each end. Post-translationally, prolines at the third position of the tripeptide repeating unit (G-X-Y) are hydroxylated in some or all of the chains. O-glycosylated; glycosaminoglycan of chondroitin-sulfate type.

It localises to the secreted. The protein resides in the extracellular space. Its subcellular location is the extracellular matrix. Functionally, type XII collagen interacts with type I collagen-containing fibrils, the COL1 domain could be associated with the surface of the fibrils, and the COL2 and NC3 domains may be localized in the perifibrillar matrix. This is Collagen alpha-1(XII) chain (COL12A1) from Oryctolagus cuniculus (Rabbit).